Here is a 78-residue protein sequence, read N- to C-terminus: Sec-independent protein translocase protein TatA (78 aa).

The helical transmembrane segment at 1–21 threads the bilayer; it reads MGGISIWQLLIVALIVVLLFG. The tract at residues 40 to 78 is disordered; sequence KSAMSSEEEKKAIEDSASEKTAQTEEKKTESKDKDKEQV. Basic and acidic residues predominate over residues 46-78; it reads EEEKKAIEDSASEKTAQTEEKKTESKDKDKEQV.

It belongs to the TatA/E family. The Tat system comprises two distinct complexes: a TatABC complex, containing multiple copies of TatA, TatB and TatC subunits, and a separate TatA complex, containing only TatA subunits. Substrates initially bind to the TatABC complex, which probably triggers association of the separate TatA complex to form the active translocon.

The protein resides in the cell inner membrane. Functionally, part of the twin-arginine translocation (Tat) system that transports large folded proteins containing a characteristic twin-arginine motif in their signal peptide across membranes. TatA could form the protein-conducting channel of the Tat system. This is Sec-independent protein translocase protein TatA from Shewanella sediminis (strain HAW-EB3).